The chain runs to 135 residues: Ribonuclease P protein component (135 aa).

Belongs to the RnpA family. Consists of a catalytic RNA component (M1 or rnpB) and a protein subunit.

It carries out the reaction Endonucleolytic cleavage of RNA, removing 5'-extranucleotides from tRNA precursor.. Its function is as follows. RNaseP catalyzes the removal of the 5'-leader sequence from pre-tRNA to produce the mature 5'-terminus. It can also cleave other RNA substrates such as 4.5S RNA. The protein component plays an auxiliary but essential role in vivo by binding to the 5'-leader sequence and broadening the substrate specificity of the ribozyme. This is Ribonuclease P protein component from Saccharophagus degradans (strain 2-40 / ATCC 43961 / DSM 17024).